Here is a 207-residue protein sequence, read N- to C-terminus: Large ribosomal subunit protein uL4 (207 aa).

Positions 47 to 77 (GTADTKTRAEVSGGGRKPWRQKGTGRARHGS) are disordered. The span at 63 to 77 (KPWRQKGTGRARHGS) shows a compositional bias: basic residues.

The protein belongs to the universal ribosomal protein uL4 family. Part of the 50S ribosomal subunit.

One of the primary rRNA binding proteins, this protein initially binds near the 5'-end of the 23S rRNA. It is important during the early stages of 50S assembly. It makes multiple contacts with different domains of the 23S rRNA in the assembled 50S subunit and ribosome. Its function is as follows. Forms part of the polypeptide exit tunnel. The chain is Large ribosomal subunit protein uL4 from Symbiobacterium thermophilum (strain DSM 24528 / JCM 14929 / IAM 14863 / T).